A 540-amino-acid chain; its full sequence is T-complex protein 1 subunit alpha (540 aa).

The protein belongs to the TCP-1 chaperonin family. In terms of assembly, component of the T-complex protein 1 (TCP1) complex.

The protein localises to the cytoplasm. In terms of biological role, molecular chaperone; assists the folding of proteins upon ATP hydrolysis. The sequence is that of T-complex protein 1 subunit alpha (TCP1) from Encephalitozoon cuniculi (strain GB-M1) (Microsporidian parasite).